We begin with the raw amino-acid sequence, 588 residues long: Beta-(1--&gt;2)glucan export ATP-binding/permease protein NdvA (588 aa).

The ABC transmembrane type-1 domain occupies 21–301; it reads VAVVVIANVI…MRQFVTQIFE (281 aa). 6 helical membrane passes run 22–42, 57–77, 136–156, 158–178, 248–268, and 272–292; these read AVVV…PVLF, PILI…VAVA, THLA…AMDL, LSFV…WVMG, TAST…VKNG, and VGDV…LDQM. The ABC transporter domain occupies 335–569; sequence VEFRNINFGF…GGRFTSLLRT (235 aa). 368 to 375 is a binding site for ATP; the sequence is GPTGAGKT.

It belongs to the ABC transporter superfamily. Beta-(1--&gt;2)glucan exporter (TC 3.A.1.108.1) family. Homodimer.

It localises to the cell inner membrane. The enzyme catalyses [(1-&gt;2)-beta-D-glucosyl](n)(in) + ATP + H2O = [(1-&gt;2)-beta-D-glucosyl](n)(out) + ADP + phosphate + H(+). Its function is as follows. Involved in beta-(1--&gt;2)glucan export which is required for crown gall tumor formation. Transmembrane domains (TMD) form a pore in the inner membrane and the ATP-binding domain (NBD) is responsible for energy generation. The chain is Beta-(1--&gt;2)glucan export ATP-binding/permease protein NdvA from Rhizobium radiobacter (Agrobacterium tumefaciens).